A 152-amino-acid polypeptide reads, in one-letter code: UPF0266 membrane protein YobD (152 aa).

3 helical membrane passes run leucine 6 to methionine 26, valine 45 to histidine 65, and alanine 67 to isoleucine 87.

This sequence belongs to the UPF0266 family.

Its subcellular location is the cell inner membrane. The protein is UPF0266 membrane protein YobD of Salmonella agona (strain SL483).